The primary structure comprises 344 residues: L-rhamnose-proton symporter (344 aa).

10 helical membrane passes run 4–24 (AITM…CFYA), 38–58 (WSVG…ALLL), 68–88 (FSLS…IGNI), 101–121 (MGIG…TPII), 137–157 (TLLG…AGQL), 175–195 (LVLA…MNAA), 214–234 (LPSY…FCFI), 259–279 (VLLS…YAWG), 290–310 (ISWM…GLVL), and 323–343 (VLSL…IGMA).

Belongs to the L-rhamnose transporter (TC 2.A.7.6) family.

It is found in the cell inner membrane. It carries out the reaction L-rhamnopyranose(in) + H(+)(in) = L-rhamnopyranose(out) + H(+)(out). In terms of biological role, uptake of L-rhamnose across the cytoplasmic membrane with the concomitant transport of protons into the cell (symport system). In Escherichia coli O1:K1 / APEC, this protein is L-rhamnose-proton symporter.